We begin with the raw amino-acid sequence, 244 residues long: MAALTIFPAIDLKAGQVVRLAEGDMDRATVYGDDPAAQARRFADAGATHLHVVDLDGAFAGASVNGAAVESIIAAFPGQVQVGGGIRDRAGVDRWLALGVARVIIGTAALKDPEFVKSAARDLPGRIVVGVDARDGMVATEGWADVSDVRVEDLARRFEDAGVAALLFTDVGRDGLLKGCNVAATVALAGVVDIPVIASGGVAGIEDIHALRPHVADGIEGVITGRALYDGRLDLAEAIAAGAA.

Asp11 acts as the Proton acceptor in catalysis. Residue Asp132 is the Proton donor of the active site.

The protein belongs to the HisA/HisF family.

Its subcellular location is the cytoplasm. It catalyses the reaction 1-(5-phospho-beta-D-ribosyl)-5-[(5-phospho-beta-D-ribosylamino)methylideneamino]imidazole-4-carboxamide = 5-[(5-phospho-1-deoxy-D-ribulos-1-ylimino)methylamino]-1-(5-phospho-beta-D-ribosyl)imidazole-4-carboxamide. It participates in amino-acid biosynthesis; L-histidine biosynthesis; L-histidine from 5-phospho-alpha-D-ribose 1-diphosphate: step 4/9. This is 1-(5-phosphoribosyl)-5-[(5-phosphoribosylamino)methylideneamino] imidazole-4-carboxamide isomerase from Sphingopyxis alaskensis (strain DSM 13593 / LMG 18877 / RB2256) (Sphingomonas alaskensis).